Reading from the N-terminus, the 114-residue chain is MADTGYYAGYQDDVDVDEHKRHQALYLIGIILLVTVCLIVLWVCIMLACYVPGFLKKTLEAWLNSSSLMKRRVASTLTRTPFEATGPERERNWDARRQSTTVNPASQPNTGSVF.

Residues 27–47 (LIGIILLVTVCLIVLWVCIML) form a helical membrane-spanning segment. The disordered stretch occupies residues 79–114 (RTPFEATGPERERNWDARRQSTTVNPASQPNTGSVF). Residues 86–97 (GPERERNWDARR) are compositionally biased toward basic and acidic residues. Residues 98-114 (QSTTVNPASQPNTGSVF) show a composition bias toward polar residues.

The protein belongs to the nanovirus movement protein family.

It is found in the host cell membrane. May transport viral genome to neighboring plant cells directly through plasmosdesmata, without any budding. The movement protein allows efficient cell to cell propagation, by bypassing the host cell wall barrier. This is Putative movement protein (DNA-M) from Faba bean necrotic yellows virus (isolate Syrian SV292-88) (FBNYV).